Consider the following 610-residue polypeptide: Dihydroxy-acid dehydratase (610 aa).

Aspartate 81 is a binding site for Mg(2+). Cysteine 122 provides a ligand contact to [2Fe-2S] cluster. Mg(2+) contacts are provided by aspartate 123 and lysine 124. Lysine 124 carries the N6-carboxylysine modification. Cysteine 193 lines the [2Fe-2S] cluster pocket. Glutamate 489 lines the Mg(2+) pocket. Catalysis depends on serine 515, which acts as the Proton acceptor.

Belongs to the IlvD/Edd family. In terms of assembly, homodimer. [2Fe-2S] cluster serves as cofactor. The cofactor is Mg(2+).

It catalyses the reaction (2R)-2,3-dihydroxy-3-methylbutanoate = 3-methyl-2-oxobutanoate + H2O. The enzyme catalyses (2R,3R)-2,3-dihydroxy-3-methylpentanoate = (S)-3-methyl-2-oxopentanoate + H2O. The protein operates within amino-acid biosynthesis; L-isoleucine biosynthesis; L-isoleucine from 2-oxobutanoate: step 3/4. It functions in the pathway amino-acid biosynthesis; L-valine biosynthesis; L-valine from pyruvate: step 3/4. In terms of biological role, functions in the biosynthesis of branched-chain amino acids. Catalyzes the dehydration of (2R,3R)-2,3-dihydroxy-3-methylpentanoate (2,3-dihydroxy-3-methylvalerate) into 2-oxo-3-methylpentanoate (2-oxo-3-methylvalerate) and of (2R)-2,3-dihydroxy-3-methylbutanoate (2,3-dihydroxyisovalerate) into 2-oxo-3-methylbutanoate (2-oxoisovalerate), the penultimate precursor to L-isoleucine and L-valine, respectively. This chain is Dihydroxy-acid dehydratase, found in Xylella fastidiosa (strain M23).